Consider the following 607-residue polypeptide: Elongation factor 4 (607 aa).

Positions 11–193 (KSIRNFSIIA…QIVAKVPAPT (183 aa)) constitute a tr-type G domain. Residues 23–28 (DHGKST) and 140–143 (NKID) contribute to the GTP site.

Belongs to the TRAFAC class translation factor GTPase superfamily. Classic translation factor GTPase family. LepA subfamily.

It localises to the cell membrane. It carries out the reaction GTP + H2O = GDP + phosphate + H(+). In terms of biological role, required for accurate and efficient protein synthesis under certain stress conditions. May act as a fidelity factor of the translation reaction, by catalyzing a one-codon backward translocation of tRNAs on improperly translocated ribosomes. Back-translocation proceeds from a post-translocation (POST) complex to a pre-translocation (PRE) complex, thus giving elongation factor G a second chance to translocate the tRNAs correctly. Binds to ribosomes in a GTP-dependent manner. This Exiguobacterium sibiricum (strain DSM 17290 / CCUG 55495 / CIP 109462 / JCM 13490 / 255-15) protein is Elongation factor 4.